Here is a 99-residue protein sequence, read N- to C-terminus: Putative septation protein SpoVG (99 aa).

This sequence belongs to the SpoVG family.

Functionally, could be involved in septation. This chain is Putative septation protein SpoVG, found in Onion yellows phytoplasma (strain OY-M).